The following is a 344-amino-acid chain: Melanocyte-stimulating hormone receptor (344 aa).

Over 1 to 37 (MPMQGAQRKLLGSLNSTPTATSNPGLAANHTGAPCLE) the chain is Extracellular. N29 carries an N-linked (GlcNAc...) asparagine glycan. A helical membrane pass occupies residues 38 to 63 (VSIPDGLFLSLGLVSLVENVLVVAAI). At 64-72 (AKNRNLHSS) the chain is on the cytoplasmic side. Residues 73–93 (MYYFICCLALSDLLVSGSNML) form a helical membrane-spanning segment. The Extracellular segment spans residues 94 to 118 (ETAIILLLEAGTLATRASVVQQLHN). Residues 119–140 (TIDVLTCSSMLCSLCFLGAIAV) form a helical membrane-spanning segment. Residues 141–163 (DRYISIFYALRYHSIMTLPRAQR) lie on the Cytoplasmic side of the membrane. The chain crosses the membrane as a helical span at residues 164–183 (AIAAIWVASVLSSTLFITYY). Topologically, residues 184-191 (DHAAVLLC) are extracellular. Residues 192–211 (LVVFFLAMLVLMAVLYVHML) traverse the membrane as a helical segment. At 212–240 (ARACQHAQGIIRLHNRQLPAHKGFGLRGA) the chain is on the cytoplasmic side. Residues 241–266 (ATLTILLGIFFLCWGPFFLHLTLVVF) traverse the membrane as a helical segment. Residues 267-279 (CPQHLTCNCIFKN) lie on the Extracellular side of the membrane. The chain crosses the membrane as a helical span at residues 280 to 300 (FKVFLTLIICNTIIDPLIYAF). Residues 301-344 (RSQELRRTLKEVLLCSSWPGCWAEGGGDSVWPGSCVTLRGPLPP) are Cytoplasmic-facing. C315 is lipidated: S-palmitoyl cysteine.

Belongs to the G-protein coupled receptor 1 family. Interacts with MGRN1, but does not undergo MGRN1-mediated ubiquitination; this interaction competes with GNAS-binding and thus inhibits agonist-induced cAMP production. Interacts with OPN3; the interaction results in a decrease in MC1R-mediated cAMP signaling and ultimately a decrease in melanin production in melanocytes.

It localises to the cell membrane. Receptor for MSH (alpha, beta and gamma) and ACTH. The activity of this receptor is mediated by G proteins which activate adenylate cyclase. Mediates melanogenesis, the production of eumelanin (black/brown) and phaeomelanin (red/yellow), via regulation of cAMP signaling in melanocytes. The chain is Melanocyte-stimulating hormone receptor (MC1R) from Callithrix jacchus (White-tufted-ear marmoset).